Consider the following 106-residue polypeptide: Small ribosomal subunit protein uS10 (106 aa).

Belongs to the universal ribosomal protein uS10 family. Part of the 30S ribosomal subunit.

In terms of biological role, involved in the binding of tRNA to the ribosomes. This is Small ribosomal subunit protein uS10 from Pyrobaculum islandicum (strain DSM 4184 / JCM 9189 / GEO3).